A 491-amino-acid chain; its full sequence is MISKQEYQAQAAQGYNRIPLVQELLADLDTPLSLYLKLANRPYTYLLESVVGGERFGRYSFIGLPCSHYLKAGGKHVDVYQNGEIVEQYDGNPLPFIEAFHNRFKTPEIPSLPRFTGGLVGYFGYETVYNFEHFAHRLKNTAKANPLGTPDILLMLSQELAVIDNLSGKIHLIVYADPSQPDSYERARERLEDIRTQLRQSCAIPLSLGSKQTQAVSEFGEEPFKACVDKIKDYIFAGDCMQVVPSQRMSMEFTDNPLALYRALRTLNPSPYLFYYDFGDFHIVGSSPEILVRRERDDVIVRPIAGTRLRGKTPAEDLANEQDLLSDAKEIAEHVMLIDLGRNDVGRISKTGEVKVTDKMVIEKYSHVMHIVSNVEGCLKEGVTNMDILAATFPAGTLSGAPKVRAMEIIEEIEPEKRGIYGGAVGVWGFNNDMDLAIAIRTAVIKNNTLFIQSGAGVVADSDPTSEWQETQNKARAVVRAAQMVQEGLDK.

Residues Ser-49 and 271 to 273 (PYL) each bind L-tryptophan. Residue 306–307 (GT) participates in chorismate binding. Glu-333 provides a ligand contact to Mg(2+). Chorismate is bound by residues Tyr-421, Arg-441, 455–457 (GAG), and Gly-457. Glu-470 is a binding site for Mg(2+).

Belongs to the anthranilate synthase component I family. Heterotetramer consisting of two non-identical subunits: a beta subunit (TrpG) and a large alpha subunit (TrpE). The cofactor is Mg(2+).

The enzyme catalyses chorismate + L-glutamine = anthranilate + pyruvate + L-glutamate + H(+). The protein operates within amino-acid biosynthesis; L-tryptophan biosynthesis; L-tryptophan from chorismate: step 1/5. With respect to regulation, feedback inhibited by tryptophan. Functionally, part of a heterotetrameric complex that catalyzes the two-step biosynthesis of anthranilate, an intermediate in the biosynthesis of L-tryptophan. In the first step, the glutamine-binding beta subunit (TrpG) of anthranilate synthase (AS) provides the glutamine amidotransferase activity which generates ammonia as a substrate that, along with chorismate, is used in the second step, catalyzed by the large alpha subunit of AS (TrpE) to produce anthranilate. In the absence of TrpG, TrpE can synthesize anthranilate directly from chorismate and high concentrations of ammonia. The sequence is that of Anthranilate synthase component 1 (trpE) from Neisseria gonorrhoeae (strain ATCC 700825 / FA 1090).